We begin with the raw amino-acid sequence, 505 residues long: Mannosyl-oligosaccharide alpha-1,2-mannosidase 1B (505 aa).

A signal peptide spans 1–16 (MRTLLALAALAGFAAA). Asn-88 and Asn-174 each carry an N-linked (GlcNAc...) asparagine glycan. Residues Cys-325 and Cys-354 are joined by a disulfide bond. Asn-359 carries an N-linked (GlcNAc...) asparagine glycan. The active-site Proton donor is the Glu-368. Ca(2+) is bound at residue Thr-494.

Belongs to the glycosyl hydrolase 47 family. As to quaternary structure, monomer. Ca(2+) serves as cofactor. The cofactor is Mg(2+).

The protein localises to the cytoplasmic vesicle lumen. The catalysed reaction is N(4)-(alpha-D-Man-(1-&gt;2)-alpha-D-Man-(1-&gt;2)-alpha-D-Man-(1-&gt;3)-[alpha-D-Man-(1-&gt;2)-alpha-D-Man-(1-&gt;3)-[alpha-D-Man-(1-&gt;2)-alpha-D-Man-(1-&gt;6)]-alpha-D-Man-(1-&gt;6)]-beta-D-Man-(1-&gt;4)-beta-D-GlcNAc-(1-&gt;4)-beta-D-GlcNAc)-L-asparaginyl-[protein] (N-glucan mannose isomer 9A1,2,3B1,2,3) + 4 H2O = N(4)-(alpha-D-Man-(1-&gt;3)-[alpha-D-Man-(1-&gt;3)-[alpha-D-Man-(1-&gt;6)]-alpha-D-Man-(1-&gt;6)]-beta-D-Man-(1-&gt;4)-beta-D-GlcNAc-(1-&gt;4)-beta-D-GlcNAc)-L-asparaginyl-[protein] (N-glucan mannose isomer 5A1,2) + 4 beta-D-mannose. It catalyses the reaction N(4)-(alpha-D-Man-(1-&gt;2)-alpha-D-Man-(1-&gt;2)-alpha-D-Man-(1-&gt;3)-[alpha-D-Man-(1-&gt;3)-[alpha-D-Man-(1-&gt;2)-alpha-D-Man-(1-&gt;6)]-alpha-D-Man-(1-&gt;6)]-beta-D-Man-(1-&gt;4)-beta-D-GlcNAc-(1-&gt;4)-beta-D-GlcNAc)-L-asparaginyl-[protein] (N-glucan mannose isomer 8A1,2,3B1,3) + 3 H2O = N(4)-(alpha-D-Man-(1-&gt;3)-[alpha-D-Man-(1-&gt;3)-[alpha-D-Man-(1-&gt;6)]-alpha-D-Man-(1-&gt;6)]-beta-D-Man-(1-&gt;4)-beta-D-GlcNAc-(1-&gt;4)-beta-D-GlcNAc)-L-asparaginyl-[protein] (N-glucan mannose isomer 5A1,2) + 3 beta-D-mannose. It functions in the pathway protein modification; protein glycosylation. In terms of biological role, involved in the maturation of Asn-linked oligosaccharides. Progressively trims alpha-1,2-linked mannose residues from Man(9)GlcNAc(2) to produce Man(5)GlcNAc(2). The polypeptide is Mannosyl-oligosaccharide alpha-1,2-mannosidase 1B (mns1B) (Emericella nidulans (strain FGSC A4 / ATCC 38163 / CBS 112.46 / NRRL 194 / M139) (Aspergillus nidulans)).